The following is a 184-amino-acid chain: UPF0398 protein BC_1561 (184 aa).

The protein belongs to the UPF0398 family.

In Bacillus cereus (strain ATCC 14579 / DSM 31 / CCUG 7414 / JCM 2152 / NBRC 15305 / NCIMB 9373 / NCTC 2599 / NRRL B-3711), this protein is UPF0398 protein BC_1561.